The primary structure comprises 330 residues: DNA-directed RNA polymerase subunit alpha (330 aa).

The alpha N-terminal domain (alpha-NTD) stretch occupies residues 1–236 (MQGSVTEFLK…EQLDAFVDLR (236 aa)). An alpha C-terminal domain (alpha-CTD) region spans residues 250–330 (FDPILLRPVD…NWPPASIAED (81 aa)).

This sequence belongs to the RNA polymerase alpha chain family. As to quaternary structure, homodimer. The RNAP catalytic core consists of 2 alpha, 1 beta, 1 beta' and 1 omega subunit. When a sigma factor is associated with the core the holoenzyme is formed, which can initiate transcription.

It carries out the reaction RNA(n) + a ribonucleoside 5'-triphosphate = RNA(n+1) + diphosphate. Functionally, DNA-dependent RNA polymerase catalyzes the transcription of DNA into RNA using the four ribonucleoside triphosphates as substrates. This Vibrio atlanticus (strain LGP32) (Vibrio splendidus (strain Mel32)) protein is DNA-directed RNA polymerase subunit alpha.